A 143-amino-acid chain; its full sequence is Nucleoside diphosphate kinase 2 (143 aa).

Lysine 11, phenylalanine 59, arginine 87, threonine 93, arginine 104, and asparagine 114 together coordinate ATP. Histidine 117 (pros-phosphohistidine intermediate) is an active-site residue.

This sequence belongs to the NDK family. In terms of assembly, homotetramer. It depends on Mg(2+) as a cofactor.

The protein resides in the cytoplasm. It carries out the reaction a 2'-deoxyribonucleoside 5'-diphosphate + ATP = a 2'-deoxyribonucleoside 5'-triphosphate + ADP. The enzyme catalyses a ribonucleoside 5'-diphosphate + ATP = a ribonucleoside 5'-triphosphate + ADP. Major role in the synthesis of nucleoside triphosphates other than ATP. The ATP gamma phosphate is transferred to the NDP beta phosphate via a ping-pong mechanism, using a phosphorylated active-site intermediate. This is Nucleoside diphosphate kinase 2 from Protochlamydia amoebophila (strain UWE25).